A 292-amino-acid polypeptide reads, in one-letter code: Xyloglucan endotransglucosylase/hydrolase protein A (292 aa).

Residues 1–20 form the signal peptide; it reads MGSSLWTCLILLSLASASFA. In terms of domain architecture, GH16 spans 21-219; it reads ANPRTPIDVP…WSKAPFIASY (199 aa). Glu-105 serves as the catalytic Nucleophile. The active-site Proton donor is Glu-109. Glu-109 serves as a coordination point for xyloglucan. A glycan (N-linked (GlcNAc...) asparagine) is linked at Asn-113. Xyloglucan is bound by residues 122–124, 132–134, 198–199, and Gly-203; these read QTN, DRE, and DW. 2 cysteine pairs are disulfide-bonded: Cys-227–Cys-236 and Cys-273–Cys-286. A xyloglucan-binding site is contributed by Arg-278.

The protein belongs to the glycosyl hydrolase 16 family. XTH group 1 subfamily. In terms of processing, contains at least one intrachain disulfide bond essential for its enzymatic activity. As to expression, predominantly expressed in the phloem fibers of growing internodes. Expressed in xylem cells in the basal part of the internode. In the internode, it is expressed closer to the top of the internode compared to XTHB.

It is found in the secreted. Its subcellular location is the cell wall. The protein resides in the extracellular space. The protein localises to the apoplast. It carries out the reaction breaks a beta-(1-&gt;4) bond in the backbone of a xyloglucan and transfers the xyloglucanyl segment on to O-4 of the non-reducing terminal glucose residue of an acceptor, which can be a xyloglucan or an oligosaccharide of xyloglucan.. In terms of biological role, catalyzes xyloglucan endohydrolysis (XEH) and/or endotransglycosylation (XET). Cleaves and religates xyloglucan polymers, an essential constituent of the primary cell wall, and thereby participates in cell wall construction of growing tissues. In Phaseolus angularis (Azuki bean), this protein is Xyloglucan endotransglucosylase/hydrolase protein A (XTHA).